We begin with the raw amino-acid sequence, 376 residues long: 3-aminomethylindole N-methyltransferase (376 aa).

S-adenosyl-L-homocysteine contacts are provided by glycine 220, aspartate 243, aspartate 263, and methionine 264.

Belongs to the class I-like SAM-binding methyltransferase superfamily. Cation-independent O-methyltransferase family. As to expression, more present in the fifth leaf than in the second leaf (at protein level).

It carries out the reaction 3-(aminomethyl)indole + 2 S-adenosyl-L-methionine = gramine + 2 S-adenosyl-L-homocysteine + 2 H(+). It participates in alkaloid biosynthesis. With respect to regulation, repressed by sodium carbonate, sodium bicarbonate and K-phosphate. Methylates 3-aminomethylindole (AMI) and N-methyl-3-aminomethylindole (MAMI), two substrates involved in gramine biosynthesis, a toxic indole alkaloid. Can use S-adenosyl-L-methionine (AdoMet) as a methyl donor. Unable to mediate caffeic acid O-methylation. This is 3-aminomethylindole N-methyltransferase from Hordeum vulgare subsp. vulgare (Domesticated barley).